A 103-amino-acid chain; its full sequence is Large ribosomal subunit protein bL21 (103 aa).

It belongs to the bacterial ribosomal protein bL21 family. As to quaternary structure, part of the 50S ribosomal subunit. Contacts protein L20.

This protein binds to 23S rRNA in the presence of protein L20. This is Large ribosomal subunit protein bL21 from Aromatoleum aromaticum (strain DSM 19018 / LMG 30748 / EbN1) (Azoarcus sp. (strain EbN1)).